We begin with the raw amino-acid sequence, 403 residues long: Phosphopentomutase (403 aa).

Positions 13, 298, 303, 339, 340, and 351 each coordinate Mn(2+).

This sequence belongs to the phosphopentomutase family. Mn(2+) serves as cofactor.

Its subcellular location is the cytoplasm. It catalyses the reaction 2-deoxy-alpha-D-ribose 1-phosphate = 2-deoxy-D-ribose 5-phosphate. It carries out the reaction alpha-D-ribose 1-phosphate = D-ribose 5-phosphate. It participates in carbohydrate degradation; 2-deoxy-D-ribose 1-phosphate degradation; D-glyceraldehyde 3-phosphate and acetaldehyde from 2-deoxy-alpha-D-ribose 1-phosphate: step 1/2. Functionally, isomerase that catalyzes the conversion of deoxy-ribose 1-phosphate (dRib-1-P) and ribose 1-phosphate (Rib-1-P) to deoxy-ribose 5-phosphate (dRib-5-P) and ribose 5-phosphate (Rib-5-P), respectively. This Streptococcus pneumoniae (strain JJA) protein is Phosphopentomutase.